The following is a 359-amino-acid chain: NADH-quinone oxidoreductase subunit H (359 aa).

8 helical membrane-spanning segments follow: residues 19 to 39 (IGWF…FIAL), 94 to 114 (FLFV…FAVL), 127 to 147 (VGLF…LAAG), 175 to 195 (IALL…IILM), 202 to 222 (FLHW…IYFI), 255 to 275 (FAVI…IISI), 301 to 321 (VWGA…QMWL), and 337 to 357 (CWKV…IWVI).

The protein belongs to the complex I subunit 1 family. NDH-1 is composed of 14 different subunits. Subunits NuoA, H, J, K, L, M, N constitute the membrane sector of the complex.

It is found in the cell inner membrane. It catalyses the reaction a quinone + NADH + 5 H(+)(in) = a quinol + NAD(+) + 4 H(+)(out). NDH-1 shuttles electrons from NADH, via FMN and iron-sulfur (Fe-S) centers, to quinones in the respiratory chain. The immediate electron acceptor for the enzyme in this species is believed to be ubiquinone. Couples the redox reaction to proton translocation (for every two electrons transferred, four hydrogen ions are translocated across the cytoplasmic membrane), and thus conserves the redox energy in a proton gradient. This subunit may bind ubiquinone. This Chlorobaculum tepidum (strain ATCC 49652 / DSM 12025 / NBRC 103806 / TLS) (Chlorobium tepidum) protein is NADH-quinone oxidoreductase subunit H.